The primary structure comprises 382 residues: Lipid-A-disaccharide synthase (382 aa).

This sequence belongs to the LpxB family.

The enzyme catalyses 2-N,3-O-bis[(3R)-3-hydroxytetradecanoyl]-alpha-D-glucosaminyl 1-phosphate + UDP-2-N,3-O-bis[(3R)-3-hydroxytetradecanoyl]-alpha-D-glucosamine = lipid A disaccharide (E. coli) + UDP + H(+). It catalyses the reaction a lipid X + a UDP-2-N,3-O-bis[(3R)-3-hydroxyacyl]-alpha-D-glucosamine = a lipid A disaccharide + UDP + H(+). The protein operates within glycolipid biosynthesis; lipid IV(A) biosynthesis; lipid IV(A) from (3R)-3-hydroxytetradecanoyl-[acyl-carrier-protein] and UDP-N-acetyl-alpha-D-glucosamine: step 5/6. Its function is as follows. Condensation of UDP-2,3-diacylglucosamine and 2,3-diacylglucosamine-1-phosphate to form lipid A disaccharide, a precursor of lipid A, a phosphorylated glycolipid that anchors the lipopolysaccharide to the outer membrane of the cell. This is Lipid-A-disaccharide synthase from Escherichia coli O17:K52:H18 (strain UMN026 / ExPEC).